Consider the following 196-residue polypeptide: Probable GTP-binding protein EngB (196 aa).

In terms of domain architecture, EngB-type G spans 24–196 (ELSEVALSGR…IWNLIEPYIS (173 aa)). Residues 32 to 39 (GRSNVGKS), 59 to 63 (GKTQT), 77 to 80 (DVPG), 144 to 147 (TKED), and 176 to 178 (YSS) each bind GTP. 2 residues coordinate Mg(2+): Ser-39 and Thr-61.

The protein belongs to the TRAFAC class TrmE-Era-EngA-EngB-Septin-like GTPase superfamily. EngB GTPase family. Requires Mg(2+) as cofactor.

In terms of biological role, necessary for normal cell division and for the maintenance of normal septation. This chain is Probable GTP-binding protein EngB, found in Staphylococcus aureus (strain MW2).